The sequence spans 140 residues: Arsenate reductase (140 aa).

Catalysis depends on Cys-11, which acts as the Nucleophile; cysteine thioarsenate intermediate.

It belongs to the ArsC family.

The catalysed reaction is [glutaredoxin]-dithiol + arsenate + glutathione + H(+) = glutathionyl-S-S-[glutaredoxin] + arsenite + H2O. Involved in resistance to arsenate. Catalyzes the reduction of arsenate [As(V)] to arsenite [As(III)]. The resulting arsenite is then extruded from the cell via the aquaglyceroporin AqpS. Does not display antimonate reductase activity. The sequence is that of Arsenate reductase from Rhizobium meliloti (strain 1021) (Ensifer meliloti).